A 499-amino-acid chain; its full sequence is Glutamate--tRNA ligase (499 aa).

The short motif at 12 to 22 (PSPTGHLHIGN) is the 'HIGH' region element. The 'KMSKS' region motif lies at 259–263 (KLSKR). Position 262 (Lys262) interacts with ATP.

This sequence belongs to the class-I aminoacyl-tRNA synthetase family. Glutamate--tRNA ligase type 1 subfamily. Monomer.

The protein localises to the cytoplasm. It carries out the reaction tRNA(Glu) + L-glutamate + ATP = L-glutamyl-tRNA(Glu) + AMP + diphosphate. Its function is as follows. Catalyzes the attachment of glutamate to tRNA(Glu) in a two-step reaction: glutamate is first activated by ATP to form Glu-AMP and then transferred to the acceptor end of tRNA(Glu). This is Glutamate--tRNA ligase from Lactobacillus acidophilus (strain ATCC 700396 / NCK56 / N2 / NCFM).